The sequence spans 320 residues: Malate dehydrogenase (320 aa).

Residues 10–15 (GSGMIG) and Asp-34 each bind NAD(+). Substrate contacts are provided by Arg-83 and Arg-89. NAD(+)-binding positions include Asn-96 and 119-121 (ITN). 2 residues coordinate substrate: Asn-121 and Arg-152. His-176 (proton acceptor) is an active-site residue.

The protein belongs to the LDH/MDH superfamily. MDH type 3 family.

It catalyses the reaction (S)-malate + NAD(+) = oxaloacetate + NADH + H(+). In terms of biological role, catalyzes the reversible oxidation of malate to oxaloacetate. The chain is Malate dehydrogenase from Bartonella tribocorum (strain CIP 105476 / IBS 506).